Here is an 863-residue protein sequence, read N- to C-terminus: Leucine--tRNA ligase (863 aa).

The 'HIGH' region motif lies at 42-53 (PYPSGSGLHVGH). Positions 635–639 (KMSKS) match the 'KMSKS' region motif. Residue Lys-638 coordinates ATP.

Belongs to the class-I aminoacyl-tRNA synthetase family.

The protein resides in the cytoplasm. It catalyses the reaction tRNA(Leu) + L-leucine + ATP = L-leucyl-tRNA(Leu) + AMP + diphosphate. In Salinibacter ruber (strain DSM 13855 / M31), this protein is Leucine--tRNA ligase.